A 392-amino-acid polypeptide reads, in one-letter code: V-type proton ATPase subunit C (392 aa).

At Ala2 the chain carries N-acetylalanine.

This sequence belongs to the V-ATPase C subunit family. As to quaternary structure, V-ATPase is a heteromultimeric enzyme composed of a peripheral catalytic V1 complex (components A to H) attached to an integral membrane V0 proton pore complex (components: a, c, c', c'', d, e, f and VOA1). Interacts directly with VMA4.

Its subcellular location is the vacuole membrane. Its function is as follows. Subunit of the V1 complex of vacuolar(H+)-ATPase (V-ATPase), a multisubunit enzyme composed of a peripheral complex (V1) that hydrolyzes ATP and a membrane integral complex (V0) that translocates protons. V-ATPase is responsible for acidifying and maintaining the pH of intracellular compartments. Subunit C is necessary for the assembly of the catalytic sector of the enzyme and is likely to have a specific function in its catalytic activity. Reversibly leaves the enzyme after glucose depletion, causing the catalytic subcomplex V1 to detach from the V0 section. The sequence is that of V-type proton ATPase subunit C from Saccharomyces cerevisiae (strain ATCC 204508 / S288c) (Baker's yeast).